The following is a 202-amino-acid chain: Ras-related protein RABD2b (202 aa).

Residues 15–23, 33–40, 63–67, 121–124, and 151–153 contribute to the GTP site; these read GDSGVGKSC, YLDSYIST, DTAGQ, NKND, and SAK. Residues 37 to 45 carry the Effector region motif; it reads YISTIGVDF. The tract at residues 174-202 is disordered; the sequence is ASQPAGGAKPPTVQIRGQPVNQQSGCCSS. Residues 192 to 202 are compositionally biased toward polar residues; it reads PVNQQSGCCSS. 2 S-geranylgeranyl cysteine lipidation sites follow: Cys-199 and Cys-200.

The protein belongs to the small GTPase superfamily. Rab family.

Its subcellular location is the golgi apparatus. The protein localises to the trans-Golgi network membrane. It is found in the golgi apparatus membrane. Functionally, protein transport. Regulator of membrane traffic from the Golgi apparatus towards the endoplasmic reticulum (ER). The chain is Ras-related protein RABD2b (RABD2B) from Arabidopsis thaliana (Mouse-ear cress).